A 253-amino-acid chain; its full sequence is Putative B3 domain-containing protein Os03g0619850 (253 aa).

Positions 26–119 (MSCFLIRMTT…CFEVMILDSD (94 aa)) form a DNA-binding region, TF-B3. 2 disordered regions span residues 126–150 (LKSN…AGPP) and 230–253 (HRDA…EQDS). Residues 230-239 (HRDADQERQM) show a composition bias toward basic and acidic residues.

Its subcellular location is the nucleus. This is Putative B3 domain-containing protein Os03g0619850 from Oryza sativa subsp. japonica (Rice).